The chain runs to 265 residues: Small ribosomal subunit protein eS1 (265 aa).

The interval Glu-234–Gly-256 is disordered. Positions Gly-247 to Gly-256 are enriched in basic and acidic residues.

The protein belongs to the eukaryotic ribosomal protein eS1 family. In terms of assembly, component of the small ribosomal subunit. Mature ribosomes consist of a small (40S) and a large (60S) subunit. The 40S subunit contains about 33 different proteins and 1 molecule of RNA (18S). The 60S subunit contains about 49 different proteins and 3 molecules of RNA (28S, 5.8S and 5S).

The protein localises to the cytoplasm. This is Small ribosomal subunit protein eS1 from Aplysia californica (California sea hare).